A 380-amino-acid polypeptide reads, in one-letter code: Growth-regulating factor 4 (380 aa).

Residues 1 to 21 (MDLQLKQWRSQQQNESEEQGS) are disordered. The 36-residue stretch at 82–117 (FFSWAQWQELELQALIYRYMLAGASVPQELLLPIKK) folds into the QLQ domain. A WRC domain is found at 151-195 (DPEPGRCKRTDGKKWRCSRDVVAGHKYCDRHIHRGRNRSRKPVET). Short sequence motifs (bipartite nuclear localization signal) lie at residues 156–166 (RCKRTDGKKWR) and 184–191 (RGRNRSRK). 2 disordered regions span residues 222–270 (NNNH…GRSD) and 284–330 (RSSD…NMRN). Low complexity-rich tracts occupy residues 228 to 245 (SSGSSQPLHLSHQQSCSS) and 285 to 296 (SSDSTSSPMSSS). The span at 297-320 (TCHLSISMPGNNTSSDVSLKLSTG) shows a compositional bias: polar residues.

This sequence belongs to the GRF family. As to expression, strongly expressed in actively growing and developing tissues, such as roots, upper stems, and shoot tips containing the shoot apical meristem (SAM) and flower buds. Also expressed in mature flowers, but weakly expressed in mature stems and leaves.

It is found in the nucleus. Its function is as follows. Transcription activator that plays a role in the regulation of cell expansion in leaf and cotyledons tissues. Component of a network formed by miR396, the GRFs and their interacting factors (GIFs) acting in the regulation of meristem function, at least partially through the control of cell proliferation. The chain is Growth-regulating factor 4 (GRF4) from Arabidopsis thaliana (Mouse-ear cress).